The primary structure comprises 367 residues: Inhibin alpha chain (367 aa).

The signal sequence occupies residues 1–20 (MVPPLPLLLLLLLVPQGGHG). Residues 21 to 63 (CQGSELDREIVLAKVRALFLDALGPPAVTGEGGDPGVRRLPRR) constitute a propeptide that is removed on maturation. A propeptide spans 64 to 233 (HALGGFARRG…PPSGGERTRR (170 aa)) (inhibin alpha N-terminal region). N-linked (GlcNAc...) asparagine glycosylation is found at N147 and N269. 3 disulfides stabilise this stretch: C263-C329, C292-C364, and C296-C366.

This sequence belongs to the TGF-beta family. Dimeric, linked by one or more disulfide bonds. Activin B is a dimer of alpha and beta-B. Inhibin A is a dimer of alpha and beta-A. Inhibin B is a dimer of alpha and beta-B. Interacts with TGFBR3L; this interaction regulates female fertility. Post-translationally, proteolytic processing yields a number of bioactive forms, consisting either solely of the mature alpha chain, of the most N-terminal propeptide linked through a disulfide bond to the mature alpha chain, or of the entire proprotein.

Its subcellular location is the secreted. Inhibins and activins inhibit and activate, respectively, the secretion of follitropin by the pituitary gland. Inhibins/activins are involved in regulating a number of diverse functions such as hypothalamic and pituitary hormone secretion, gonadal hormone secretion, germ cell development and maturation, erythroid differentiation, insulin secretion, nerve cell survival, embryonic axial development or bone growth, depending on their subunit composition. Inhibins appear to oppose the functions of activins. Functionally, inhibin A is a dimer of alpha/INHA and beta-A/INHBA that functions as a feedback regulator in the hypothalamic-pituitary-gonadal (HPG) axis. Inhibits the secretion of FSH from the anterior pituitary gland by acting on pituitary gonadotrope cells. Antagonizes activin A by binding to the proteoglycan, betaglycan, and forming a stable complex with and, thereby, sequestering type II activin receptors while excluding type I receptor. In terms of biological role, inhibin B is a dimer of alpha and beta-B that plays a crucial role in the regulation of the reproductive system by inhibiting the secretion of follicle-stimulating hormone (FSH) from the anterior pituitary gland. Thereby, maintains reproductive homeostasis in both males and females. Acts as a more potent suppressor of FSH release than inhibin A. Functions as competitive receptor antagonist binding activin type II receptors with high affinity in the presence of the TGF-beta type III coreceptor/TGFBR3L. The polypeptide is Inhibin alpha chain (INHA) (Equus caballus (Horse)).